Consider the following 873-residue polypeptide: Zinc fingers and homeoboxes protein 1 (873 aa).

Positions 24–63 (LISDLDEGPPVLTPVENTRAESISSDEEVHESVDSDNQQN) are disordered. Threonine 36 bears the Phosphothreonine mark. Phosphoserine occurs at positions 45, 47, and 48. C2H2-type zinc fingers lie at residues 70–93 (YECKYCTFQTPDLNMFTFHVDSEH) and 102–125 (YVCVECNFLTKRYDALSEHNLKYH). Lysine 159 is covalently cross-linked (Glycyl lysine isopeptide (Lys-Gly) (interchain with G-Cter in SUMO2)). A disordered region spans residues 198-236 (VHHNSVEDVPEEKENEIKPDREETVENPSSSASESNTST). Phosphoserine is present on serine 202. The span at 212 to 221 (NEIKPDREET) shows a compositional bias: basic and acidic residues. The segment covering 223 to 236 (ENPSSSASESNTST) has biased composition (low complexity). A required for dimerization region spans residues 272–432 (NSNLIPKVLI…QNNVQKSQVP (161 aa)). The required for interaction with NFYA stretch occupies residues 272 to 564 (NSNLIPKVLI…VQPKQSWNPF (293 aa)). A DNA-binding region (homeobox 1) is located at residues 284–346 (NSIPTYNAAL…LKHGVSWTPE (63 aa)). Positions 431-454 (VPAAQPTAETKPATAAVPTSQSVK) are disordered. Glycyl lysine isopeptide (Lys-Gly) (interchain with G-Cter in SUMO2) cross-links involve residues lysine 441, lysine 454, and lysine 485. A DNA-binding region (homeobox 2) is located at residues 464 to 526 (SFGIRAKKTK…YNQRNSKSNQ (63 aa)). Disordered stretches follow at residues 544–563 (DETTESPTVGTVQPKQSWNP), 626–668 (KEEK…CKKT), and 732–769 (SSMNGLSSLRKRGRGRPKGRGRGRPRGRPRGSKRINNW). Residues 550-562 (PTVGTVQPKQSWN) are compositionally biased toward polar residues. A DNA-binding region (homeobox 3) is located at residues 569-630 (PQKFKEKTAE…KSKALKEEKM (62 aa)). Lysine 629 participates in a covalent cross-link: Glycyl lysine isopeptide (Lys-Gly) (interchain with G-Cter in SUMO2). Residue serine 648 is modified to Phosphoserine. Positions 660 to 722 (STGKICKKTP…YAWKNGNLKW (63 aa)) form a DNA-binding region, homeobox 4. A required for nuclear localization region spans residues 734-768 (MNGLSSLRKRGRGRPKGRGRGRPRGRPRGSKRINN). Over residues 740–764 (LRKRGRGRPKGRGRGRPRGRPRGSK) the composition is skewed to basic residues. Serine 774 carries the phosphoserine modification. The homeobox 5 DNA-binding region spans 777-832 (KFKTGTAILKDYYLKHKFLNEQDLDELVNKSHMGYEQVREWFAERQRRSELGIELF). The tract at residues 829 to 873 (IELFEENEEEDEVIDDQEEDEEETDDSDTWEPPRHVKRKLSKSDD) is disordered. A compositionally biased stretch (acidic residues) spans 831 to 857 (LFEENEEEDEVIDDQEEDEEETDDSDT). The interval 831-873 (LFEENEEEDEVIDDQEEDEEETDDSDTWEPPRHVKRKLSKSDD) is required for repressor activity. Over residues 863–873 (HVKRKLSKSDD) the composition is skewed to basic residues.

Belongs to the ZHX family. As to quaternary structure, forms homodimers. Heterodimer (via HD1 domain) with ZHX2 (via HD1 domain). Also forms a heterodimer with ZHX3 which is a prerequisite for repressor activity. Interacts with ATF7IP and NFYA. Interacts (via homeobox domains) with DNMT3B (via PWWP domain).

The protein resides in the nucleus. In terms of biological role, acts as a transcriptional repressor. Increases DNMT3B-mediated repressive transcriptional activity when DNMT3B is tethered to DNA. May link molecule between DNMT3B and other co-repressor proteins. This Pongo pygmaeus (Bornean orangutan) protein is Zinc fingers and homeoboxes protein 1 (ZHX1).